The primary structure comprises 185 residues: RING-H2 finger protein ATL8 (185 aa).

The helical transmembrane segment at 28 to 48 threads the bilayer; that stretch reads LVLILAVLLCALTCIIGLIAV. The RING-type; atypical zinc finger occupies 104 to 146; the sequence is CAICLTEFAAGDELRVLPQCGHGFHVSCIDTWLGSHSSCPSCR. The tract at residues 161–185 is disordered; the sequence is PGSSSSGPEPDTRIKQREDGPDNLP. Basic and acidic residues predominate over residues 170 to 185; the sequence is PDTRIKQREDGPDNLP.

The protein belongs to the RING-type zinc finger family. ATL subfamily.

The protein localises to the membrane. It catalyses the reaction S-ubiquitinyl-[E2 ubiquitin-conjugating enzyme]-L-cysteine + [acceptor protein]-L-lysine = [E2 ubiquitin-conjugating enzyme]-L-cysteine + N(6)-ubiquitinyl-[acceptor protein]-L-lysine.. Its pathway is protein modification; protein ubiquitination. The protein is RING-H2 finger protein ATL8 (ATL8) of Arabidopsis thaliana (Mouse-ear cress).